A 386-amino-acid chain; its full sequence is MNIHEYQAKEILRKYGVPTSTGLVVTKTEKINETIDKLNTKVYVIKAQIHAGGRGKAGGVKVAKSKEEAKKVAHDMFGINLVTHQTGPQGQKVNRIYIESGCDILKEYYFSIVFDRSASCITFIASTEGGVDIEAVAEKMPEKIIKFAVDPATGLQDFHMRGIAYELGFKDNQAKQMKEIVKAVYNAFIETDATQIEINPLIINSYGNLLALDAKITFDDNGLFKHPNITAMRDHDEEDPLETRAANAGLSYVKMDGNIGCMVNGAGLAMATMDIIKLYGALPANFLDVGGGADRERVKEALKIILSDKEVKGILVNIFGGIMRCDIIAEGIIAAAKDIGIKVPLVVRLAGTNVEKGKEILSNSDLKIIPAHDLADAANKIVEAIR.

Residues 9–244 (KEILRKYGVP…HDEEDPLETR (236 aa)) enclose the ATP-grasp domain. ATP contacts are provided by residues lysine 46, 53–55 (GRG), glutamate 99, cysteine 102, and glutamate 107. The Mg(2+) site is built by asparagine 199 and aspartate 213. Substrate is bound by residues asparagine 264 and 321–323 (GIM).

It belongs to the succinate/malate CoA ligase beta subunit family. Heterotetramer of two alpha and two beta subunits. It depends on Mg(2+) as a cofactor.

It carries out the reaction succinate + ATP + CoA = succinyl-CoA + ADP + phosphate. It catalyses the reaction GTP + succinate + CoA = succinyl-CoA + GDP + phosphate. Its pathway is carbohydrate metabolism; tricarboxylic acid cycle; succinate from succinyl-CoA (ligase route): step 1/1. Functionally, succinyl-CoA synthetase functions in the citric acid cycle (TCA), coupling the hydrolysis of succinyl-CoA to the synthesis of either ATP or GTP and thus represents the only step of substrate-level phosphorylation in the TCA. The beta subunit provides nucleotide specificity of the enzyme and binds the substrate succinate, while the binding sites for coenzyme A and phosphate are found in the alpha subunit. This is Succinate--CoA ligase [ADP-forming] subunit beta from Rickettsia prowazekii (strain Madrid E).